A 240-amino-acid chain; its full sequence is UDP-2,3-diacylglucosamine hydrolase (240 aa).

The Mn(2+) site is built by Asp-8, His-10, Asp-41, Asn-79, and His-114. A substrate-binding site is contributed by 79 to 80 (NR). The substrate site is built by Asp-122, Ser-160, Asn-164, Lys-167, and His-195. Mn(2+)-binding residues include His-195 and His-197.

It belongs to the LpxH family. Mn(2+) serves as cofactor.

The protein localises to the cell inner membrane. It carries out the reaction UDP-2-N,3-O-bis[(3R)-3-hydroxytetradecanoyl]-alpha-D-glucosamine + H2O = 2-N,3-O-bis[(3R)-3-hydroxytetradecanoyl]-alpha-D-glucosaminyl 1-phosphate + UMP + 2 H(+). It participates in glycolipid biosynthesis; lipid IV(A) biosynthesis; lipid IV(A) from (3R)-3-hydroxytetradecanoyl-[acyl-carrier-protein] and UDP-N-acetyl-alpha-D-glucosamine: step 4/6. Hydrolyzes the pyrophosphate bond of UDP-2,3-diacylglucosamine to yield 2,3-diacylglucosamine 1-phosphate (lipid X) and UMP by catalyzing the attack of water at the alpha-P atom. Involved in the biosynthesis of lipid A, a phosphorylated glycolipid that anchors the lipopolysaccharide to the outer membrane of the cell. The chain is UDP-2,3-diacylglucosamine hydrolase from Escherichia coli O157:H7.